Consider the following 455-residue polypeptide: Bifunctional protein GlmU (455 aa).

Residues 1-227 (MLTDIVILAA…ATEALGVNDP (227 aa)) form a pyrophosphorylase region. UDP-N-acetyl-alpha-D-glucosamine is bound by residues 8 to 11 (LAAG), K22, Q73, 78 to 79 (GT), 100 to 102 (YGD), G137, E152, N167, and N225. D102 is a Mg(2+) binding site. N225 is a Mg(2+) binding site. Residues 228-248 (VQLAILERVFQRQQLRALQMQ) form a linker region. The segment at 249 to 455 (GLRVADPARV…HWQRPRRDKK (207 aa)) is N-acetyltransferase. 2 residues coordinate UDP-N-acetyl-alpha-D-glucosamine: R331 and K349. Catalysis depends on H361, which acts as the Proton acceptor. Y364 and N375 together coordinate UDP-N-acetyl-alpha-D-glucosamine. Acetyl-CoA is bound by residues A378, 384–385 (NY), S403, A421, and R438. The interval 420–455 (GAGSTITKEVPPGGLTLSRSPQRTIPHWQRPRRDKK) is disordered.

The protein in the N-terminal section; belongs to the N-acetylglucosamine-1-phosphate uridyltransferase family. It in the C-terminal section; belongs to the transferase hexapeptide repeat family. In terms of assembly, homotrimer. Requires Mg(2+) as cofactor.

Its subcellular location is the cytoplasm. The catalysed reaction is alpha-D-glucosamine 1-phosphate + acetyl-CoA = N-acetyl-alpha-D-glucosamine 1-phosphate + CoA + H(+). It catalyses the reaction N-acetyl-alpha-D-glucosamine 1-phosphate + UTP + H(+) = UDP-N-acetyl-alpha-D-glucosamine + diphosphate. The protein operates within nucleotide-sugar biosynthesis; UDP-N-acetyl-alpha-D-glucosamine biosynthesis; N-acetyl-alpha-D-glucosamine 1-phosphate from alpha-D-glucosamine 6-phosphate (route II): step 2/2. It functions in the pathway nucleotide-sugar biosynthesis; UDP-N-acetyl-alpha-D-glucosamine biosynthesis; UDP-N-acetyl-alpha-D-glucosamine from N-acetyl-alpha-D-glucosamine 1-phosphate: step 1/1. It participates in bacterial outer membrane biogenesis; LPS lipid A biosynthesis. Catalyzes the last two sequential reactions in the de novo biosynthetic pathway for UDP-N-acetylglucosamine (UDP-GlcNAc). The C-terminal domain catalyzes the transfer of acetyl group from acetyl coenzyme A to glucosamine-1-phosphate (GlcN-1-P) to produce N-acetylglucosamine-1-phosphate (GlcNAc-1-P), which is converted into UDP-GlcNAc by the transfer of uridine 5-monophosphate (from uridine 5-triphosphate), a reaction catalyzed by the N-terminal domain. The protein is Bifunctional protein GlmU of Acidithiobacillus ferrooxidans (strain ATCC 23270 / DSM 14882 / CIP 104768 / NCIMB 8455) (Ferrobacillus ferrooxidans (strain ATCC 23270)).